The following is a 179-amino-acid chain: Large ribosomal subunit protein uL5 (179 aa).

Belongs to the universal ribosomal protein uL5 family. In terms of assembly, part of the 50S ribosomal subunit; part of the 5S rRNA/L5/L18/L25 subcomplex. Contacts the 5S rRNA and the P site tRNA. Forms a bridge to the 30S subunit in the 70S ribosome.

Functionally, this is one of the proteins that bind and probably mediate the attachment of the 5S RNA into the large ribosomal subunit, where it forms part of the central protuberance. In the 70S ribosome it contacts protein S13 of the 30S subunit (bridge B1b), connecting the 2 subunits; this bridge is implicated in subunit movement. Contacts the P site tRNA; the 5S rRNA and some of its associated proteins might help stabilize positioning of ribosome-bound tRNAs. This chain is Large ribosomal subunit protein uL5, found in Synechococcus elongatus (strain ATCC 33912 / PCC 7942 / FACHB-805) (Anacystis nidulans R2).